Consider the following 422-residue polypeptide: S100P-binding protein (422 aa).

Disordered regions lie at residues 1-28 (MMCS…SWSS), 61-135 (LKDD…TPAK), and 170-292 (YVSE…DSGK). Over residues 80–90 (DDSRNVEKGEK) the composition is skewed to basic and acidic residues. Ser-195 is subject to Phosphoserine. Basic and acidic residues predominate over residues 231-241 (VSDKNMSDSKK). The span at 255 to 269 (TPNTGSSRRNGSYKS) shows a compositional bias: polar residues. A compositionally biased stretch (low complexity) spans 274–283 (KLPVSSSSSK).

Interacts with S100P.

It localises to the nucleus. This chain is S100P-binding protein, found in Bos taurus (Bovine).